The chain runs to 876 residues: Exosome complex component 10 homolog (876 aa).

Positions 1-22 (MSGEESMPDEEQKQSEEEEEMI) are disordered. The 3'-5' exonuclease domain occupies 279-445 (TMIDTKEKLE…YSYDMLREQL (167 aa)). 4 residues coordinate Mg(2+): D303, E305, D361, and D430. In terms of domain architecture, HRDC spans 489-569 (NTRQDYALTH…VEARDVKLEK (81 aa)). 3 stretches are compositionally biased toward basic and acidic residues: residues 690–730 (EKQE…EFDA), 741–752 (VPDDPNKPKDPE), and 834–847 (KPVRDNNADFDPFH). The tract at residues 690–876 (EKQEEEERKE…NRQGTINYKK (187 aa)) is disordered. The span at 848–861 (QKYRLKNKTKKNMA) shows a compositional bias: basic residues.

This sequence belongs to the exosome component 10/RRP6 family. In terms of assembly, component of the RNA exosome complex. Interacts with crn-5. Mg(2+) is required as a cofactor. In terms of tissue distribution, ubiquitously expressed.

The protein resides in the nucleus. The protein localises to the nucleolus. It localises to the nucleoplasm. Its function is as follows. Catalytic component of the RNA exosome complex which has 3'-&gt;5' exoribonuclease activity and participates in a multitude of cellular RNA processing and degradation events. Involved in apoptotic DNA degradation. Involved in regulation of antisense ribosomal siRNA production. Involved in response to cold-warm shock. The sequence is that of Exosome complex component 10 homolog from Caenorhabditis elegans.